We begin with the raw amino-acid sequence, 677 residues long: UvrABC system protein B (677 aa).

In terms of domain architecture, Helicase ATP-binding spans 25–412 (QGVNGGERYQ…GGEVAQQVIR (388 aa)). 38 to 45 (GATGTGKT) provides a ligand contact to ATP. The Beta-hairpin signature appears at 91 to 114 (YYDYYQPEAYVPVSDTYIAKTASI). Positions 429–591 (QVDDLLGEIR…IVPTAAGKKA (163 aa)) constitute a Helicase C-terminal domain. The region spanning 639–674 (PELIDQLEGKMKEAAKKLDFEDAANLRDRIKQLRQK) is the UVR domain.

Belongs to the UvrB family. Forms a heterotetramer with UvrA during the search for lesions. Interacts with UvrC in an incision complex.

The protein localises to the cytoplasm. In terms of biological role, the UvrABC repair system catalyzes the recognition and processing of DNA lesions. A damage recognition complex composed of 2 UvrA and 2 UvrB subunits scans DNA for abnormalities. Upon binding of the UvrA(2)B(2) complex to a putative damaged site, the DNA wraps around one UvrB monomer. DNA wrap is dependent on ATP binding by UvrB and probably causes local melting of the DNA helix, facilitating insertion of UvrB beta-hairpin between the DNA strands. Then UvrB probes one DNA strand for the presence of a lesion. If a lesion is found the UvrA subunits dissociate and the UvrB-DNA preincision complex is formed. This complex is subsequently bound by UvrC and the second UvrB is released. If no lesion is found, the DNA wraps around the other UvrB subunit that will check the other stand for damage. The protein is UvrABC system protein B of Parasynechococcus marenigrum (strain WH8102).